The chain runs to 144 residues: Large ribosomal subunit protein uL15 (144 aa).

The interval 1 to 53 is disordered; the sequence is MRLNTLSPAEGAKHSAKRLGRGIGSGLGKTGGRGHKGQKSRTGGGVRRGFEGG. A compositionally biased stretch (gly residues) spans 21–31; sequence RGIGSGLGKTG.

The protein belongs to the universal ribosomal protein uL15 family. In terms of assembly, part of the 50S ribosomal subunit.

Its function is as follows. Binds to the 23S rRNA. The chain is Large ribosomal subunit protein uL15 from Haemophilus influenzae (strain ATCC 51907 / DSM 11121 / KW20 / Rd).